Here is a 261-residue protein sequence, read N- to C-terminus: MDWGTLHTFIGGVNKHSTSIGKVWITVIFIFRVMILVVAAQEVWGDEQEDFVCNTLQPGCKNVCYDHFFPVSHIRLWALQLIFVSTPALLVAMHVAYYRHETTRKFRRGEKRNDFKDIEDIKKQKVRIEGSLWWTYTSSIFFRIIFEAAFMYVFYFLYNGYHLPWVLKCGIDPCPNLVDCFISRPTEKTVFTIFMISASVICMLLNVAELCYLLLKVCFRRSKRAQTQKNHPNHALKESKQNEMNELISDSGQNAITGFPS.

Residues 1 to 22 (MDWGTLHTFIGGVNKHSTSIGK) are Cytoplasmic-facing. The chain crosses the membrane as a helical span at residues 23-45 (VWITVIFIFRVMILVVAAQEVWG). At 46–75 (DEQEDFVCNTLQPGCKNVCYDHFFPVSHIR) the chain is on the extracellular side. Residues 76 to 98 (LWALQLIFVSTPALLVAMHVAYY) form a helical membrane-spanning segment. The Cytoplasmic portion of the chain corresponds to 99–131 (RHETTRKFRRGEKRNDFKDIEDIKKQKVRIEGS). A helical membrane pass occupies residues 132–154 (LWWTYTSSIFFRIIFEAAFMYVF). At 155-192 (YFLYNGYHLPWVLKCGIDPCPNLVDCFISRPTEKTVFT) the chain is on the extracellular side. The helical transmembrane segment at 193–215 (IFMISASVICMLLNVAELCYLLL) threads the bilayer. At 216–261 (KVCFRRSKRAQTQKNHPNHALKESKQNEMNELISDSGQNAITGFPS) the chain is on the cytoplasmic side.

This sequence belongs to the connexin family. Beta-type (group I) subfamily. In terms of assembly, a connexon is composed of a hexamer of connexins. Interacts with CNST.

Its subcellular location is the cell membrane. It is found in the cell junction. The protein resides in the gap junction. One gap junction consists of a cluster of closely packed pairs of transmembrane channels, the connexons, through which materials of low MW diffuse from one cell to a neighboring cell. The chain is Gap junction beta-6 protein (GJB6) from Homo sapiens (Human).